The following is a 268-amino-acid chain: Ribonuclease P protein subunit p30 (268 aa).

Alanine 2 is modified (N-acetylalanine). Residue serine 251 is modified to Phosphoserine.

Belongs to the eukaryotic/archaeal RNase P protein component 3 family. Component of nuclear RNase P and RNase MRP ribonucleoproteins. RNase P consists of a catalytic RNA moiety and about 10 protein subunits; POP1, POP4, POP5, POP7, RPP14, RPP21, RPP25, RPP30, RPP38 and RPP40. Within the RNase P complex, POP1, POP7 and RPP25 form the 'finger' subcomplex, POP5, RPP14, RPP40 and homodimeric RPP30 form the 'palm' subcomplex, and RPP21, POP4 and RPP38 form the 'wrist' subcomplex. All subunits of the RNase P complex interact with the catalytic RNA. Several subunits of RNase P are also part of the RNase MRP complex. RNase MRP consists of a catalytic RNA moiety and about 8 protein subunits; POP1, POP7, RPP25, RPP30, RPP38, RPP40 and possibly also POP4 and POP5.

The protein localises to the nucleus. Its subcellular location is the nucleolus. Functionally, component of ribonuclease P, a ribonucleoprotein complex that generates mature tRNA molecules by cleaving their 5'-ends. Also a component of the MRP ribonuclease complex, which cleaves pre-rRNA sequences. The sequence is that of Ribonuclease P protein subunit p30 (RPP30) from Bos taurus (Bovine).